We begin with the raw amino-acid sequence, 576 residues long: Proline--tRNA ligase (576 aa).

This sequence belongs to the class-II aminoacyl-tRNA synthetase family. ProS type 1 subfamily. In terms of assembly, homodimer.

It localises to the cytoplasm. The enzyme catalyses tRNA(Pro) + L-proline + ATP = L-prolyl-tRNA(Pro) + AMP + diphosphate. In terms of biological role, catalyzes the attachment of proline to tRNA(Pro) in a two-step reaction: proline is first activated by ATP to form Pro-AMP and then transferred to the acceptor end of tRNA(Pro). As ProRS can inadvertently accommodate and process non-cognate amino acids such as alanine and cysteine, to avoid such errors it has two additional distinct editing activities against alanine. One activity is designated as 'pretransfer' editing and involves the tRNA(Pro)-independent hydrolysis of activated Ala-AMP. The other activity is designated 'posttransfer' editing and involves deacylation of mischarged Ala-tRNA(Pro). The misacylated Cys-tRNA(Pro) is not edited by ProRS. The sequence is that of Proline--tRNA ligase from Pelobacter propionicus (strain DSM 2379 / NBRC 103807 / OttBd1).